Reading from the N-terminus, the 111-residue chain is PCNA-associated factor (111 aa).

Position 8 is a phosphoserine (S8). K15 is covalently cross-linked (Glycyl lysine isopeptide (Lys-Gly) (interchain with G-Cter in ubiquitin)). The D-box signature appears at 23-34; the sequence is RKVLGSSTSATN. Residues 23 to 111 form a disordered region; the sequence is RKVLGSSTSA…QPDHTNDEKE (89 aa). K24 bears the N6-acetyllysine; alternate mark. Residue K24 forms a Glycyl lysine isopeptide (Lys-Gly) (interchain with G-Cter in ubiquitin); alternate linkage. A phosphoserine mark is found at S28, S31, and S72. The segment covering 28–40 has biased composition (low complexity); that stretch reads SSTSATNSTSVSS. A PIP-box motif is present at residues 62–72; it reads QKGIGEFFRLS. Over residues 72-81 the composition is skewed to basic and acidic residues; that stretch reads SPKDSEKENQ. The KEN box signature appears at 78–80; it reads KEN. An Initiation motif motif is present at residues 85–97; it reads EAGSSGLGKAKRK.

In terms of assembly, interacts (when monoubiquitinated at Lys-15 and Lys-24) with PCNA. Interacts with isoform 2/p33ING1b of ING1. Interacts with BRCA1. Monoubiquitinated at Lys-15 and Lys-24 during normal S phase, promoting its association with PCNA. Also diubiquitinated at these 2 sites. Following DNA damage, monoubiquitin chains at Lys-15 and Lys-24 are probably extended, leading to disrupt the interaction with PCNA. Polyubiquitinated by the APC/C complex at the mitotic exit, leading to its degradation by the proteasome. As to expression, expressed predominantly in liver, pancreas and placenta. Not detected in heart or brain. Highly expressed in a number of tumors, especially esophageal tumors, in anaplastic thyroid carcinomas, adrenocortical carcinomas, and in non-small-cell lung cancer lines.

It localises to the nucleus. Its subcellular location is the cytoplasm. It is found in the perinuclear region. PCNA-binding protein that acts as a regulator of DNA repair during DNA replication. Following DNA damage, the interaction with PCNA is disrupted, facilitating the interaction between monoubiquitinated PCNA and the translesion DNA synthesis DNA polymerase eta (POLH) at stalled replisomes, facilitating the bypass of replication-fork-blocking lesions. Also acts as a regulator of centrosome number. The protein is PCNA-associated factor of Homo sapiens (Human).